Consider the following 127-residue polypeptide: Aspartate 1-decarboxylase (127 aa).

Ser25 serves as the catalytic Schiff-base intermediate with substrate; via pyruvic acid. Residue Ser25 is modified to Pyruvic acid (Ser). Thr57 is a substrate binding site. Catalysis depends on Tyr58, which acts as the Proton donor. Position 73 to 75 (73 to 75) interacts with substrate; sequence GAA.

The protein belongs to the PanD family. In terms of assembly, heterooctamer of four alpha and four beta subunits. It depends on pyruvate as a cofactor. Is synthesized initially as an inactive proenzyme, which is activated by self-cleavage at a specific serine bond to produce a beta-subunit with a hydroxyl group at its C-terminus and an alpha-subunit with a pyruvoyl group at its N-terminus.

The protein resides in the cytoplasm. The catalysed reaction is L-aspartate + H(+) = beta-alanine + CO2. The protein operates within cofactor biosynthesis; (R)-pantothenate biosynthesis; beta-alanine from L-aspartate: step 1/1. Its function is as follows. Catalyzes the pyruvoyl-dependent decarboxylation of aspartate to produce beta-alanine. The chain is Aspartate 1-decarboxylase from Bacillus cereus (strain G9842).